Reading from the N-terminus, the 192-residue chain is Dynein axonemal light chain 1 (192 aa).

LRR repeat units follow at residues 49–70, 71–92, 94–115, and 116–137; these read NCEK…NGLK, YLKI…EAVG, TLEE…HVMK, and KLKV…SKLG. One can recognise an LRRCT domain in the interval 150–192; it reads NPLEEKHTAEGNWMEEAVKRLPKLKKLDGNPVIKQEEEEGDES.

Belongs to the dynein light chain LC1-type family. In terms of assembly, interacts with DNAH5, a outer arm dynein heavy chain. Interacts with tubulin located within the A-tubule of the outer doublets in a ATP-independent manner.

It is found in the cytoplasm. The protein localises to the cytoskeleton. Its subcellular location is the cilium axoneme. Functionally, part of the multisubunit axonemal ATPase complexes that generate the force for cilia motility and govern beat frequency. Component of the outer arm dynein (ODA). May be involved in a mechanosensory feedback mechanism controlling ODA activity based on external conformational cues by tethering the outer arm dynein heavy chain (DNAH5) to the microtubule within the axoneme. The polypeptide is Dynein axonemal light chain 1 (dnal1) (Xenopus laevis (African clawed frog)).